A 175-amino-acid chain; its full sequence is uncharacterized protein (175 aa).

A helical membrane pass occupies residues 143-166 (TCFLFCAFVTSIFIETDYSIFFLL).

It is found in the membrane. This is an uncharacterized protein from Saccharomyces cerevisiae (strain ATCC 204508 / S288c) (Baker's yeast).